We begin with the raw amino-acid sequence, 488 residues long: MSDFIASKEDDYSKWYLDIVQKAKLADYSPVKGCMVIMPYGYSIWSKIQSILDKKFKETGHENAYFPMLIPYGFLEKEKDHIDGFSPEFAIIKDAGGESLVEPLVLRPTSETIIWNMYSKWIKSYRDLPLKINQWANVIRWEKRTRPFLRTTEFLWQEGHTAHATEEEALEETLLILDVYKRFMEDYLAIPVFCGKKSENEKFAGAVSTYSVEALMQDKKALQAATSHYLGLNFAKAFDVKFQDKDGKMKHVFASSWGVSTRLIGALIMVHSDEKGLILPPRIAPVEIIVIPIFKKEDEINKKILDYSDCVVHTLKKAEFRVEIDKDVRSSPGFRFSSAEFKGIPIRIEVGINDILLNSVTIIRRDKDRKFKYQISLDSLVSKVRVELDSMQKDLFKKALNFRTLNTKEIFRSGKDSYELFKAYVNDYSGFVLSCWCGGLNCENIIKNETKATIRCIPDDFKARDLTGMTCIYCSSKAKYYVLFAKSY.

It belongs to the class-II aminoacyl-tRNA synthetase family. ProS type 3 subfamily. As to quaternary structure, homodimer.

The protein localises to the cytoplasm. The enzyme catalyses tRNA(Pro) + L-proline + ATP = L-prolyl-tRNA(Pro) + AMP + diphosphate. Functionally, catalyzes the attachment of proline to tRNA(Pro) in a two-step reaction: proline is first activated by ATP to form Pro-AMP and then transferred to the acceptor end of tRNA(Pro). This is Proline--tRNA ligase from Borreliella afzelii (strain PKo) (Borrelia afzelii).